A 243-amino-acid chain; its full sequence is Membrane selenoprotein (243 aa).

Positions glycine 12–glutamate 63 are disordered. Residue selenocysteine 20 is a non-standard amino acid, selenocysteine. Composition is skewed to polar residues over residues isoleucine 30–lysine 43 and glycine 53–glutamate 63. Helical transmembrane passes span isoleucine 74 to isoleucine 94, valine 102 to leucine 122, isoleucine 144 to leucine 164, and valine 199 to glycine 219. Position 88 (selenocysteine 88) is a non-standard amino acid, selenocysteine.

It localises to the membrane. The polypeptide is Membrane selenoprotein (msp) (Dictyostelium discoideum (Social amoeba)).